Reading from the N-terminus, the 121-residue chain is Large ribosomal subunit protein uL22 (121 aa).

The protein belongs to the universal ribosomal protein uL22 family. In terms of assembly, part of the 50S ribosomal subunit.

In terms of biological role, this protein binds specifically to 23S rRNA; its binding is stimulated by other ribosomal proteins, e.g. L4, L17, and L20. It is important during the early stages of 50S assembly. It makes multiple contacts with different domains of the 23S rRNA in the assembled 50S subunit and ribosome. Functionally, the globular domain of the protein is located near the polypeptide exit tunnel on the outside of the subunit, while an extended beta-hairpin is found that lines the wall of the exit tunnel in the center of the 70S ribosome. The sequence is that of Large ribosomal subunit protein uL22 from Micrococcus luteus (strain ATCC 4698 / DSM 20030 / JCM 1464 / CCM 169 / CCUG 5858 / IAM 1056 / NBRC 3333 / NCIMB 9278 / NCTC 2665 / VKM Ac-2230) (Micrococcus lysodeikticus).